The following is an 85-amino-acid chain: N.vectensis toxin 1 4 (85 aa).

The first 20 residues, 1 to 20, serve as a signal peptide directing secretion; sequence MASFKIVIVCLALLVAVASA. A propeptide spanning residues 21 to 36 is cleaved from the precursor; sequence RRRDMMSDDELDYHYS. Cystine bridges form between cysteine 42–cysteine 82, cysteine 44–cysteine 72, and cysteine 65–cysteine 83.

This sequence belongs to the sea anemone sodium channel inhibitory toxin family. Type II subfamily. As to expression, expressed in ectodermal glands and in clumps outside of the extodermal layer. Is not expressed in nematocytes. In adult female tissues, shows similar expression levels in mesenteries (gametes-producing tissue), tentacles, pharynx and physa.

It is found in the secreted. Binds to site 3 of voltage-gated sodium channels and inhibits the inactivation process. Is highly active on DmNav1/TipE (drosophila) and is only extremely weakly active on rat Nav1.4-beta-1/SCN4A-SCN1B, and on human Nav1.5-beta-1/SCN5A-beta-1. This reveals high specificity for arthropod over mammalian channels. In vivo, when released into the medium, this recombinant toxin induces impaired swimming, paralysis and death of the crustacean A.nauplii within several hours. Also causes paralysis of cherry shrimps immediately after injection at very low doses. Its effect on zebrafish (D.rerio) larvae is also rapid, since it induces tail twitching accompanied by impaired swimming after 20 minutes and complete paralysis within 45 minutes. It has also been observed to cause death of zebrafish larvae within 1 hour. The sequence is that of N.vectensis toxin 1 4 from Nematostella vectensis (Starlet sea anemone).